A 365-amino-acid chain; its full sequence is MIKFLSALILLLVTTAAQAERIRDLTSVQGVRQNSLIGYGLVVGLDGTGDQTTQTPFTTQTLNNMLSQLGITVPTGTNMQLKNVAAVMVTASLPPFGRQGQTIDVVVSSMGNAKSLRGGTLLMTPLKGVDSQVYALAQGNILVGGAGASAGGSSVQVNQLNGGRITNGAVIERELPSQFGVGNTLNLQLNDEDFSMAQQIADTINRVRGYGSATALDARTIQVRVPSGNSSQVRFLADIQNMHVNVTPQDAKVVINSRTGSVVMNREVTLDSCAVAQGNLSVTVNRQANVSQPDTPFGGGQTVVTPQTQIDLRQSGGSLQSVRSSASLNNVVRALNALGATPMDLMSILQSMQSAGCLRAKLEII.

A signal peptide spans 1–19 (MIKFLSALILLLVTTAAQA).

The protein belongs to the FlgI family. In terms of assembly, the basal body constitutes a major portion of the flagellar organelle and consists of four rings (L,P,S, and M) mounted on a central rod.

It is found in the periplasm. The protein resides in the bacterial flagellum basal body. Its function is as follows. Assembles around the rod to form the L-ring and probably protects the motor/basal body from shearing forces during rotation. In Escherichia coli O9:H4 (strain HS), this protein is Flagellar P-ring protein.